A 75-amino-acid polypeptide reads, in one-letter code: Putative primary metabolism protein HVA1 (75 aa).

Residues 1–13 (MSVQDKQGQNINV) are compositionally biased toward polar residues. Disordered stretches follow at residues 1-24 (MSVQDKQGQNINVGDTVYTPYRGG) and 40-75 (AAEKGVKNPPKVLFTDQNNKDVAHNPGTLTDLDKQK).

Its function is as follows. May play a role in primary metabolism. The sequence is that of Putative primary metabolism protein HVA1 from Cryptococcus neoformans var. grubii serotype A (strain H99 / ATCC 208821 / CBS 10515 / FGSC 9487) (Filobasidiella neoformans var. grubii).